Reading from the N-terminus, the 757-residue chain is MIEAIGNQYVVARPVYSTKTFGEEFKKTHRHHKTFLDHLKGCCSCSSQKAKKIALSLFPIASWLPAYKIKEWLLSDIVSGISTGLVAVLQGLAFALLVNIPPAYGLYAAFFPVITYFFLGTSRHISVGPFPVLSMMVGVVVTRVVSDPNASSELSSSSTENDSFIEEKVMVAASVTVLSGIIQLLLGVLQVGFVVIYLSESLISGFTTAAAIHVLVSQLKFMLQLPVPAYSDPFSIFKVLESVFTQIQKTNIADLVTSVIILVVVFVFKEINQRYRSKLPVPIPIELIMTVIATGVSYGCNFEDRFGVAVVGNMSLGFQPPITPSVEVFQDTIGDSFGIAIVGFAVAFSVASVYSLKYDYPIDGNQELIALGVSNIFTGAFKGFAGSTALSRSGVQESTGGKTQVAGLLSAVIVLIVIVAIGFLLQPLQKSVLAALALGNLKGMLMQFAEIGRLWKKDKYDCLIWIMTFIFAIVLGLGLGLAASVAFQLLTIVFRTQFPKCSTLANVGRSNIYKNKKNYAEVYEPEGVKIFRCPSPIYFANIGFFKQKLIDAVGFSPLRILRKRNKALKKIRKLQKRGLIQMTPKGFICTSDGFKDSDEELDNNQIEELDQPINTTDLPFDIDWNGDLPLNITIPKISLHSLILDFSAVSFLDVSSMRGLRTILQEFIRIKVDVYIVGTDDDFIDKLARCEFFDDEVTDSIFFLTIHDAILHILMKKDYSTSKFNSSQEKERKFDFTINTNGGLRNRECQVPVETKF.

Topologically, residues 1–71 (MIEAIGNQYV…SWLPAYKIKE (71 aa)) are cytoplasmic. The chain crosses the membrane as a helical span at residues 72 to 92 (WLLSDIVSGISTGLVAVLQGL). Residue Ala93 is a topological domain, extracellular. A helical transmembrane segment spans residues 94–114 (FALLVNIPPAYGLYAAFFPVI). Topologically, residues 115 to 124 (TYFFLGTSRH) are cytoplasmic. A helical transmembrane segment spans residues 125 to 145 (ISVGPFPVLSMMVGVVVTRVV). Residues 146–176 (SDPNASSELSSSSTENDSFIEEKVMVAASVT) are Extracellular-facing. Asn149 and Asn161 each carry an N-linked (GlcNAc...) asparagine glycan. Residues 177–197 (VLSGIIQLLLGVLQVGFVVIY) traverse the membrane as a helical segment. The Cytoplasmic portion of the chain corresponds to 198–201 (LSES). A helical transmembrane segment spans residues 202–222 (LISGFTTAAAIHVLVSQLKFM). Over 223-250 (LQLPVPAYSDPFSIFKVLESVFTQIQKT) the chain is Extracellular. A helical membrane pass occupies residues 251 to 271 (NIADLVTSVIILVVVFVFKEI). The Cytoplasmic portion of the chain corresponds to 272–278 (NQRYRSK). A helical transmembrane segment spans residues 279-299 (LPVPIPIELIMTVIATGVSYG). The Extracellular portion of the chain corresponds to 300 to 335 (CNFEDRFGVAVVGNMSLGFQPPITPSVEVFQDTIGD). A helical membrane pass occupies residues 336–356 (SFGIAIVGFAVAFSVASVYSL). Over 357–367 (KYDYPIDGNQE) the chain is Cytoplasmic. The helical transmembrane segment at 368–388 (LIALGVSNIFTGAFKGFAGST) threads the bilayer. At 389 to 404 (ALSRSGVQESTGGKTQ) the chain is on the extracellular side. Residues 405–425 (VAGLLSAVIVLIVIVAIGFLL) form a helical membrane-spanning segment. Residues 426-462 (QPLQKSVLAALALGNLKGMLMQFAEIGRLWKKDKYDC) are Cytoplasmic-facing. The chain crosses the membrane as a helical span at residues 463–483 (LIWIMTFIFAIVLGLGLGLAA). The Extracellular segment spans residues 484–757 (SVAFQLLTIV…ECQVPVETKF (274 aa)). The STAS domain maps to 518–713 (NYAEVYEPEG…LTIHDAILHI (196 aa)). Residues 754 to 757 (ETKF) carry the PDZ-binding motif.

The protein belongs to the SLC26A/SulP transporter (TC 2.A.53) family. In terms of assembly, interacts with PDZK1. Interacts with CFTR, SLC26A6 and NHERF1. Interacts (via PDZ-binding motif) with NHERF4 (via the third PDZ domain). This interaction leads to decreased expression of SLC26A3 on the cell membrane resulting in its reduced exchanger activity. In terms of processing, N-glycosylation is required for efficient cell surface expression, and protection from proteolytic degradation. Expressed in spermatogenic cells. Expressed at high levels in cecum and colon and at lower levels in small intestine.

The protein localises to the apical cell membrane. It localises to the membrane. The protein resides in the cell membrane. The catalysed reaction is hydrogencarbonate(in) + 2 chloride(out) = hydrogencarbonate(out) + 2 chloride(in). Mediates chloride-bicarbonate exchange with a chloride bicarbonate stoichiometry of 2:1 in the intestinal epithelia. Plays a role in the chloride and bicarbonate homeostasis during sperm epididymal maturation and capacitation. The polypeptide is Chloride anion exchanger (Slc26a3) (Mus musculus (Mouse)).